The primary structure comprises 248 residues: Membrane-spanning 4-domains subfamily A member 6A (248 aa).

Residues 1-46 (MTSQPVPNETIIVLPSNVINFSQAEKPEPTNQGQDSLKKHLHAEIK) lie on the Cytoplasmic side of the membrane. A helical transmembrane segment spans residues 47–67 (VIGTIQILCGMMVLSLGIILA). The Extracellular segment spans residues 68 to 84 (SASFSPNFTQVTSTLLN). The helical transmembrane segment at 85 to 105 (SAYPFIGPFFFIISGSLSIAT) threads the bilayer. At 106–116 (EKRLTKLLVHS) the chain is on the cytoplasmic side. A helical membrane pass occupies residues 117 to 137 (SLVGSILSALSALVGFIILSV). Over 138–185 (KQATLNPASLQCELDKNNIPTRSYVSYFYHDSLYTTDCYTAKASLAGT) the chain is Extracellular. Residues 186–206 (LSLMLICTLLEFCLAVLTAVL) traverse the membrane as a helical segment. The Cytoplasmic portion of the chain corresponds to 207–248 (RWKQAYSDFPGSVLFLPHSYIGNSGMSSKMTHDCGYEELLTS).

It belongs to the MS4A family. As to expression, variable expression in some B-cell, myelomonocytic, and erythroleukemia cell lines.

The protein resides in the membrane. Functionally, may be involved in signal transduction as a component of a multimeric receptor complex. The chain is Membrane-spanning 4-domains subfamily A member 6A (MS4A6A) from Homo sapiens (Human).